A 216-amino-acid chain; its full sequence is Small ribosomal subunit protein uS3 (216 aa).

Residues 20-91 enclose the KH type-2 domain; it reads LKEFFEKALV…SVEIVVEKVH (72 aa).

Belongs to the universal ribosomal protein uS3 family.

The polypeptide is Small ribosomal subunit protein uS3 (RPS3) (Encephalitozoon cuniculi (strain GB-M1) (Microsporidian parasite)).